The following is a 331-amino-acid chain: Pantothenate kinase (331 aa).

An ATP-binding site is contributed by 109 to 116 (GSVAVGKS).

It belongs to the prokaryotic pantothenate kinase family.

Its subcellular location is the cytoplasm. It catalyses the reaction (R)-pantothenate + ATP = (R)-4'-phosphopantothenate + ADP + H(+). Its pathway is cofactor biosynthesis; coenzyme A biosynthesis; CoA from (R)-pantothenate: step 1/5. This Rhizobium meliloti (strain 1021) (Ensifer meliloti) protein is Pantothenate kinase.